Reading from the N-terminus, the 351-residue chain is Adenine deaminase (351 aa).

The Zn(2+) site is built by His20, His22, and His200. Glu203 acts as the Proton donor in catalysis. Asp281 contacts Zn(2+). Asp282 contacts substrate.

The protein belongs to the metallo-dependent hydrolases superfamily. Adenosine and AMP deaminases family. Adenine deaminase type 2 subfamily. Zn(2+) is required as a cofactor.

It carries out the reaction adenine + H2O + H(+) = hypoxanthine + NH4(+). Catalyzes the hydrolytic deamination of adenine to hypoxanthine. Plays an important role in the purine salvage pathway and in nitrogen catabolism. In Cupriavidus necator (strain ATCC 17699 / DSM 428 / KCTC 22496 / NCIMB 10442 / H16 / Stanier 337) (Ralstonia eutropha), this protein is Adenine deaminase.